The primary structure comprises 586 residues: Dual specificity tyrosine-phosphorylation-regulated kinase 3 (586 aa).

A compositionally biased stretch (basic and acidic residues) spans 1 to 13 (MGGAARERGRKDA). The tract at residues 1 to 187 (MGGAARERGR…QGVIGGPNNG (187 aa)) is disordered. One can recognise a Protein kinase domain in the interval 208–521 (YEVLKIIGKG…PAQALRHPWI (314 aa)). ATP contacts are provided by residues 214 to 222 (IGKGSFGQV), Lys237, and 287 to 290 (FELL). Asp334 functions as the Proton acceptor in the catalytic mechanism. The residue at position 368 (Tyr368) is a Phosphotyrosine. The Nuclear localization signal signature appears at 467–480 (RSRRGKKRGPPGSK).

Belongs to the protein kinase superfamily. CMGC Ser/Thr protein kinase family. MNB/DYRK subfamily. Interacts with SIRT1. Mg(2+) is required as a cofactor. Post-translationally, protein kinase activity is activated following autophosphorylation at Tyr-368. Ubiquitinated at anaphase by the anaphase-promoting complex (APC/C), leading to its degradation by the proteasome. In terms of tissue distribution, expressed predominantly in testis. Expressed in late pachytene spermatocytes.

The protein localises to the nucleus. Its subcellular location is the cytoplasm. The protein resides in the nucleus speckle. It is found in the cytoplasmic granule. It localises to the cytoskeleton. The protein localises to the microtubule organizing center. Its subcellular location is the centrosome. It catalyses the reaction L-seryl-[protein] + ATP = O-phospho-L-seryl-[protein] + ADP + H(+). The enzyme catalyses L-threonyl-[protein] + ATP = O-phospho-L-threonyl-[protein] + ADP + H(+). The catalysed reaction is L-tyrosyl-[protein] + ATP = O-phospho-L-tyrosyl-[protein] + ADP + H(+). Protein kinase activity is activated following autophosphorylation at Tyr-368. Dual-specificity protein kinase that promotes disassembly of several types of membraneless organelles during mitosis, such as stress granules, nuclear speckles and pericentriolar material. Dual-specificity tyrosine-regulated kinases (DYRKs) autophosphorylate a critical tyrosine residue in their activation loop and phosphorylate their substrate on serine and threonine residues. Acts as a central dissolvase of membraneless organelles during the G2-to-M transition, after the nuclear-envelope breakdown: acts by mediating phosphorylation of multiple serine and threonine residues in unstructured domains of proteins, such as SRRM1 and PCM1. Does not mediate disassembly of all membraneless organelles: disassembly of P-body and nucleolus is not regulated by DYRK3. Dissolution of membraneless organelles at the onset of mitosis is also required to release mitotic regulators, such as ZNF207, from liquid-unmixed organelles where they are sequestered and keep them dissolved during mitosis. Regulates mTORC1 by mediating the dissolution of stress granules: during stressful conditions, DYRK3 partitions from the cytosol to the stress granule, together with mTORC1 components, which prevents mTORC1 signaling. When stress signals are gone, the kinase activity of DYRK3 is required for the dissolution of stress granule and mTORC1 relocation to the cytosol: acts by mediating the phosphorylation of the mTORC1 inhibitor AKT1S1, allowing full reactivation of mTORC1 signaling. Also acts as a negative regulator of EPO-dependent erythropoiesis: may place an upper limit on red cell production during stress erythropoiesis. Inhibits cell death due to cytokine withdrawal in hematopoietic progenitor cells. Promotes cell survival upon genotoxic stress through phosphorylation of SIRT1: this in turn inhibits p53/TP53 activity and apoptosis. The protein is Dual specificity tyrosine-phosphorylation-regulated kinase 3 of Rattus norvegicus (Rat).